We begin with the raw amino-acid sequence, 274 residues long: Nickel/cobalt efflux system RcnA (274 aa).

The Periplasmic segment spans residues 1-12 (MTEFTTLLQQGN). A helical membrane pass occupies residues 13–33 (AWFFIPSVILLGALHGLEPGH). Residues 34–56 (SKTMMAAFIIAIKGTIKQAVMLG) are Cytoplasmic-facing. Residues 57–77 (LAATISHTAVVWLIAFGGMVI) traverse the membrane as a helical segment. Topologically, residues 78 to 86 (SKRFTAQSA) are periplasmic. The helical transmembrane segment at 87 to 107 (EPWLQLISAVIIISTAFWMFW) threads the bilayer. Over 108-174 (RTWRGERNWL…FDGREVTNWQ (67 aa)) the chain is Cytoplasmic. The interval 127-153 (HHHHDHEHHHDHGHHHHHEHGEYQDAH) is disordered. Residues 129–144 (HHDHEHHHDHGHHHHH) show a composition bias toward basic residues. A helical membrane pass occupies residues 175–195 (ILLFGLTGGLIPCPAAITVLL). The Periplasmic segment spans residues 196 to 209 (ICIQLKALTLGATL). The helical transmembrane segment at 210 to 230 (VVSFSIGLALTLVTVGVGAAI) threads the bilayer. At 231–251 (SVQQVAKRWSGFNTLAKRAPY) the chain is on the cytoplasmic side. A helical transmembrane segment spans residues 252–272 (FSSLLIGLVGVYMGVHGFMGI). The Periplasmic segment spans residues 273–274 (MR).

It belongs to the NiCoT transporter (TC 2.A.52) family. RcnA subfamily.

The protein resides in the cell inner membrane. Efflux system for nickel and cobalt. This Escherichia coli O9:H4 (strain HS) protein is Nickel/cobalt efflux system RcnA (rcnA).